The sequence spans 692 residues: Putative ESX-1 scaffolding and assembly protein SaeA (692 aa).

The span at 1 to 21 shows a compositional bias: basic and acidic residues; that stretch reads MGERGELVSDLHPSDDHDADP. 2 disordered regions span residues 1–23 and 87–134; these read MGERGELVSDLHPSDDHDADPRL and PAAP…TTGF. Residues 89-107 are compositionally biased toward pro residues; the sequence is APEPDPPPVPEPQPEPEPG.

It localises to the cytoplasm. Its function is as follows. May be involved in assembly of the ESX-1 / type VII specialized secretion system (T7SS), which exports several proteins including EsxA and EsxB. Involved in DNA conjugation in recipient (MKD8) but not donor (mc(2)155) strain. The polypeptide is Putative ESX-1 scaffolding and assembly protein SaeA (Mycolicibacterium smegmatis (strain ATCC 700084 / mc(2)155) (Mycobacterium smegmatis)).